A 152-amino-acid polypeptide reads, in one-letter code: Snaclec coagulation factor IX/factor X-binding protein subunit A (152 aa).

The N-terminal stretch at Met-1–Ala-23 is a signal peptide. Positions Asp-24–Ala-152 constitute a C-type lectin domain. 3 disulfide bridges follow: Cys-25/Cys-36, Cys-53/Cys-150, and Cys-125/Cys-142. Ca(2+) contacts are provided by Ser-64, Glu-66, and Glu-70. Residue Glu-151 participates in Ca(2+) binding.

Belongs to the snaclec family. In terms of assembly, heterodimer of subunits A and B; disulfide-linked. In terms of tissue distribution, expressed by the venom gland.

It is found in the secreted. In terms of biological role, anticoagulant protein which binds to the gamma-carboxyglutamic acid-domain regions of factors IX (F9) and factor X (F10) in the presence of calcium with a 1 to 1 stoichiometry. This is Snaclec coagulation factor IX/factor X-binding protein subunit A from Protobothrops flavoviridis (Habu).